We begin with the raw amino-acid sequence, 471 residues long: MASKSQHNAPKVKSPNGKAGSQGQWGRAWEVDWFSLASIIFLLLFAPFIVYYFIMACDQYSCSLTAPALDIATGHASLADIWAKTPPVTAKAAQLYALWVSFQVLLYSWLPDFCHRFLPGYVGGVQEGAITPAGVVNKYEVNGLQAWLITHILWFVNAYLLSWFSPTIIFDNWIPLLWCANILGYAVSTFAMIKGYLFPTSAEDCKFTGNFFYNYMMGIEFNPRIGKWFDFKLFFNGRPGIVAWTLINLSFAAKQQELYGHVTNSMILVNVLQAIYVLDFFWNETWYLKTIDICHDHFGWYLGWGDCVWLPYLYTLQGLYLVYHPVQLSTPNALGILLLGLVGYYIFRMTNHQKDLFRRTDGRCLIWGKKPKAIECSYTSADGLKHHSKLLVSGFWGVARHFNYTGDLMGSLAYCLACGGGHLLPYFYIIYMTILLTHRCLRDEHRCANKYGRDWERYTAAVPYRLLPGIF.

The segment at 1-23 (MASKSQHNAPKVKSPNGKAGSQG) is disordered. Ser14 is subject to Phosphoserine. A run of 8 helical transmembrane segments spans residues 36–56 (LASI…FIMA), 95–115 (LYAL…DFCH), 144–164 (LQAW…LSWF), 173–193 (WIPL…FAMI), 233–253 (LFFN…SFAA), 262–282 (VTNS…DFFW), 302–322 (LGWG…LYLV), and 327–347 (QLST…YYIF). Residues Lys354, Arg358, Leu391, Trp396, and 403-404 (NY) contribute to the NADP(+) site. The helical transmembrane segment at 416–436 (LACGGGHLLPYFYIIYMTILL) threads the bilayer. NADP(+) is bound by residues Asp443, 447 to 451 (CANKY), and Tyr458.

Belongs to the ERG4/ERG24 family. Interacts with DHCR24; this interaction regulates DHCR7 activity. Interacts with TMEM147.

It is found in the endoplasmic reticulum membrane. It catalyses the reaction cholesterol + NADP(+) = 7-dehydrocholesterol + NADPH + H(+). It carries out the reaction 7-dehydrodesmosterol + NADPH + H(+) = desmosterol + NADP(+). The enzyme catalyses 5,6alpha-epoxy-5alpha-cholestan-3beta-ol + H2O = 5alpha-cholestane-3beta,5,6beta-triol. The catalysed reaction is 5,6beta-epoxy-5beta-cholestan-3beta-ol + H2O = 5alpha-cholestane-3beta,5,6beta-triol. The protein operates within steroid biosynthesis; cholesterol biosynthesis. Its function is as follows. Oxidoreductase that catalyzes the last step of the cholesterol synthesis pathway, which transforms cholesta-5,7-dien-3beta-ol (7-dehydrocholesterol,7-DHC) into cholesterol by reducing the C7-C8 double bond of its sterol core. Can also metabolize cholesta-5,7,24-trien-3beta-ol (7-dehydrodemosterol, 7-DHD) to desmosterol, which is then metabolized by the Delta(24)-sterol reductase (DHCR24) to cholesterol. Modulates ferroptosis (a form of regulated cell death driven by iron-dependent lipid peroxidation) through the metabolic breakdown of the anti-ferroptotic metabolites 7-DHC and 7-DHD which, when accumulated, divert the propagation of peroxyl radical-mediated damage from phospholipid components to its sterol core, protecting plasma and mitochondrial membranes from phospholipid autoxidation. Functionally, component of the microsomal antiestrogen binding site (AEBS), a multiproteic complex at the ER membrane that consists of an association between cholestenol Delta-isomerase/EBP and DHCR7. This complex is responsible for cholesterol-5,6-epoxide hydrolase (ChEH) activity, which consists in the hydration of cholesterol-5,6-epoxides (5,6-EC) into cholestane-3beta,5alpha,6beta-triol (CT). The precise role of each component of this complex has not been described yet. The polypeptide is 7-dehydrocholesterol reductase (Dhcr7) (Mus musculus (Mouse)).